The following is a 357-amino-acid chain: Ribosomal RNA large subunit methyltransferase M (357 aa).

Residues serine 183, 216 to 219, aspartate 235, aspartate 255, and aspartate 271 contribute to the S-adenosyl-L-methionine site; that span reads APGG. Lysine 300 acts as the Proton acceptor in catalysis.

Belongs to the class I-like SAM-binding methyltransferase superfamily. RNA methyltransferase RlmE family. RlmM subfamily. As to quaternary structure, monomer.

It localises to the cytoplasm. The catalysed reaction is cytidine(2498) in 23S rRNA + S-adenosyl-L-methionine = 2'-O-methylcytidine(2498) in 23S rRNA + S-adenosyl-L-homocysteine + H(+). Catalyzes the 2'-O-methylation at nucleotide C2498 in 23S rRNA. This is Ribosomal RNA large subunit methyltransferase M from Pseudomonas savastanoi pv. phaseolicola (strain 1448A / Race 6) (Pseudomonas syringae pv. phaseolicola (strain 1448A / Race 6)).